Consider the following 84-residue polypeptide: Small ribosomal subunit protein uS17c (84 aa).

Belongs to the universal ribosomal protein uS17 family. As to quaternary structure, part of the 30S ribosomal subunit.

The protein localises to the plastid. It is found in the chloroplast. Its function is as follows. One of the primary rRNA binding proteins, it binds specifically to the 5'-end of 16S ribosomal RNA. This Trieres chinensis (Marine centric diatom) protein is Small ribosomal subunit protein uS17c (rps17).